We begin with the raw amino-acid sequence, 250 residues long: Beta-crystallin B1 (250 aa).

Residues 1-47 (MSQVAKAAATTAVNPGPDGKGKGTPSTGTAPAPGPTPVPASVPRPAA) form a disordered region. Residue serine 2 is modified to N-acetylserine. Positions 2–56 (SQVAKAAATTAVNPGPDGKGKGTPSTGTAPAPGPTPVPASVPRPAAKVGELPPGS) are N-terminal arm. The segment covering 32 to 42 (APGPTPVPASV) has biased composition (pro residues). 2 consecutive Beta/gamma crystallin 'Greek key' domains span residues 57–96 (YRLV…IVLS) and 97–141 (GPWV…RPIR). The segment at 142–146 (MDSQE) is connecting peptide. 2 Beta/gamma crystallin 'Greek key' domains span residues 147 to 188 (HKIC…TVSS) and 189 to 231 (GTWV…RRLR). Residues 233–250 (RQWHQEGCFPVLTAEPPK) form a C-terminal arm region.

The protein belongs to the beta/gamma-crystallin family. Homo/heterodimer, or complexes of higher-order. The structure of beta-crystallin oligomers seems to be stabilized through interactions between the N-terminal arms. Post-translationally, specific cleavages in the N-terminal arm occur during lens maturation and give rise to truncated forms, leading to impaired oligomerization and protein insolubilization. The protease responsible for this partial degradation could be calpain II.

Functionally, crystallins are the dominant structural components of the vertebrate eye lens. The chain is Beta-crystallin B1 (Crybb1) from Rattus norvegicus (Rat).